A 311-amino-acid polypeptide reads, in one-letter code: Burkholderia TALE-like protein 3 (311 aa).

Residues 19–50 (LSPFECLKIEKHSGGADALEFISNKYDALTQV) form a Cryptic repeat -1 repeat. One copy of the Cryptic repeat 0 repeat lies at 51 to 83 (LSRADILKIACHDCAAHALQAVLDYEQVFRQRG). Core repeat repeat units lie at residues 84–116 (FARA…NECG), 117–149 (FSQA…NERD), 150–182 (YSGA…CESG), 183–215 (YSGA…CERG), 216–248 (YCRT…CERG), and 249–281 (YSRT…TQAG). Residues 282–311 (RSNEDIVNMAARTGAAGQIRKMAAQLSGRQ) form a Cryptic repeat +1 repeat.

It belongs to the transcription activator-like effector (TALE) family. Bat subfamily.

In terms of biological role, does not bind DNA, probably because it has too few core repeats. This chain is Burkholderia TALE-like protein 3, found in Mycetohabitans rhizoxinica (strain DSM 19002 / CIP 109453 / HKI 454) (Paraburkholderia rhizoxinica).